Here is a 438-residue protein sequence, read N- to C-terminus: Acid phosphatase type 7 (438 aa).

A signal peptide spans 1 to 26; the sequence is MHPLPGYWSCYCLLLLFSLGVQGSLG. 3 residues coordinate Fe cation: Asp-141, Asp-170, and Tyr-173. Position 170 (Asp-170) interacts with Zn(2+). Zn(2+) is bound at residue Asn-205. N-linked (GlcNAc...) asparagine glycosylation occurs at Asn-211. His-286 and His-333 together coordinate Zn(2+). His-335 is a Fe cation binding site. 2 N-linked (GlcNAc...) asparagine glycosylation sites follow: Asn-350 and Asn-404.

Belongs to the metallophosphoesterase superfamily. Purple acid phosphatase family. Fe cation serves as cofactor. It depends on Zn(2+) as a cofactor.

It localises to the secreted. It catalyses the reaction a phosphate monoester + H2O = an alcohol + phosphate. The protein is Acid phosphatase type 7 of Homo sapiens (Human).